Reading from the N-terminus, the 697-residue chain is Alpha-1,4-glucan:maltose-1-phosphate maltosyltransferase (697 aa).

K284 is a binding site for alpha-maltose 1-phosphate. The tract at residues R286–S305 is disordered. Alpha-maltose 1-phosphate contacts are provided by Q344 and D379. D414 serves as the catalytic Nucleophile. N415 contacts alpha-maltose 1-phosphate. Residue E443 is the Proton donor of the active site. K553 to Y554 lines the alpha-maltose 1-phosphate pocket.

The protein belongs to the glycosyl hydrolase 13 family. GlgE subfamily. Homodimer.

It carries out the reaction alpha-maltose 1-phosphate + [(1-&gt;4)-alpha-D-glucosyl](n) = [(1-&gt;4)-alpha-D-glucosyl](n+2) + phosphate. Its pathway is glycan biosynthesis; glycogen biosynthesis. With respect to regulation, the transfer reaction from maltose-1-P to glycogen is inhibited by micromolar amounts of inorganic phosphate or arsenate but is only slightly inhibited by millimolar concentrations of glucose-1-P, glucose-6-P, or inorganic pyrophosphate. Is also inhibited by ATP, by 1,4-dideoxy-1,4-imino-D-arabinitol (DIA), but not by isofagomine. In terms of biological role, maltosyltransferase that uses maltose 1-phosphate (M1P) as the sugar donor to elongate linear or branched alpha-(1-&gt;4)-glucans. Is also able to catalyze the reverse reaction in vitro. Cannot use glucose 1-phosphate as substrate. Is involved in a branched alpha-glucan biosynthetic pathway from trehalose, together with TreS, Mak and GlgB. The polypeptide is Alpha-1,4-glucan:maltose-1-phosphate maltosyltransferase (glgE) (Mycolicibacterium smegmatis (strain ATCC 700084 / mc(2)155) (Mycobacterium smegmatis)).